The sequence spans 28 residues: Dermaseptin-DI2 (28 aa).

In terms of tissue distribution, expressed by the skin glands.

The protein localises to the secreted. Its function is as follows. Has antibacterial activity against the Gram-positive bacteria S.aureus and E.faecalis, and the Gram-negative bacteria P.aeruginosa and E.coli. Has antiprotozoal activity against T.cruzi. Has antifungal activity against the yeasts C.tropicalis (MIC=10.9 uM), C.guilliermondii (MIC=21.8 uM), C.albicans (MIC=21.8 uM) and C.albicans ATCC 1023 (MIC=10.9 uM). Decreases viability of murine peritoneal cells. Fuses to, and disrupts liposomes. The protein is Dermaseptin-DI2 of Phyllomedusa distincta (Monkey frog).